Reading from the N-terminus, the 551-residue chain is Cytochrome c oxidase subunit 1 (551 aa).

Residues V29 to A49 form a helical membrane-spanning segment. Fe(II)-heme a is bound at residue H76. Transmembrane regions (helical) follow at residues I79–L99, A113–G133, L156–V176, L205–I225, L245–I265, I283–F303, M313–W333, M348–V368, F382–G402, F424–M444, and I466–L486. Residues H251, Y255, H300, and H301 each coordinate Cu cation. A cross-link (1'-histidyl-3'-tyrosine (His-Tyr)) is located at residues H251–Y255. H386 lines the heme a3 pocket. H388 contacts Fe(II)-heme a.

Belongs to the heme-copper respiratory oxidase family. Cu(2+) serves as cofactor. The cofactor is heme.

It is found in the cell membrane. It catalyses the reaction 4 Fe(II)-[cytochrome c] + O2 + 8 H(+)(in) = 4 Fe(III)-[cytochrome c] + 2 H2O + 4 H(+)(out). The protein operates within energy metabolism; oxidative phosphorylation. In terms of biological role, cytochrome c oxidase is the component of the respiratory chain that catalyzes the reduction of oxygen to water. Subunits 1-3 form the functional core of the enzyme complex. CO I is the catalytic subunit of the enzyme. Electrons originating in cytochrome c are transferred via the copper A center of subunit 2 and heme A of subunit 1 to the bimetallic center formed by heme A3 and copper B. The chain is Cytochrome c oxidase subunit 1 (ctaD) from Synechocystis sp. (strain ATCC 27184 / PCC 6803 / Kazusa).